The following is a 276-amino-acid chain: Small ribosomal subunit protein uS5w (276 aa).

Residues 1–15 show a composition bias toward basic and acidic residues; it reads MAERGVERGGDRGDF. The interval 1 to 42 is disordered; that stretch reads MAERGVERGGDRGDFGRGFGGRGGGRGGPRGRGRRAGRAPEE. A compositionally biased stretch (gly residues) spans 16–28; that stretch reads GRGFGGRGGGRGG. An S5 DRBM domain is found at 87-150; sequence LKDEVMKIMP…ILAKLSVVPI (64 aa).

This sequence belongs to the universal ribosomal protein uS5 family.

The chain is Small ribosomal subunit protein uS5w (RPS2D) from Arabidopsis thaliana (Mouse-ear cress).